The sequence spans 254 residues: MTRMKVNQMSLLEHIAELRKRLLIVALAFVVFFIAGFFLAKPIIVYLQETDEAKQLTLNAFNLTDPLYVFMQFAFIIGIVLTSPVILYQLWAFVSPGLYEKERKVTLSYIPVSILLFLAGLSFSYYILFPFVVDFMKRISQDLNVNQVIGINEYFHFLLQLTIPFGLLFQMPVILMFLTRLGIVTPMFLAKIRKYAYFTLLVIAALITPPELLSHMMVTVPLLILYEISILISKAAYRKAQKSSAADRDVSSGQ.

Helical transmembrane passes span 24-44 (IVALAFVVFFIAGFFLAKPII), 67-87 (LYVFMQFAFIIGIVLTSPVIL), 112-132 (VSILLFLAGLSFSYYILFPFV), 157-177 (FLLQLTIPFGLLFQMPVILMF), 187-207 (MFLAKIRKYAYFTLLVIAALI), and 212-232 (LLSHMMVTVPLLILYEISILI).

This sequence belongs to the TatC family. As to quaternary structure, forms a complex with TatAy. Two types of complexes exist: one composed of TatAy and TatCy, and another composed only of TatAy.

It is found in the cell membrane. Its function is as follows. Part of the twin-arginine translocation (Tat) system that transports large folded proteins containing a characteristic twin-arginine motif in their signal peptide across membranes. Required for YwbN secretion. The chain is Sec-independent protein translocase protein TatCy from Bacillus subtilis (strain 168).